The sequence spans 391 residues: uncharacterized protein (391 aa).

This is an uncharacterized protein from Sinorhizobium fredii (strain NBRC 101917 / NGR234).